Reading from the N-terminus, the 429-residue chain is Glycine betaine monooxygenase oxygenase subunit (429 aa).

One can recognise a Rieske domain in the interval 56 to 163 (WLIAGMTCEI…VKTAGGYIFI (108 aa)). [2Fe-2S] cluster is bound by residues Cys-98, His-100, Cys-118, and His-121. Fe cation contacts are provided by His-217 and His-222.

The protein belongs to the bacterial ring-hydroxylating dioxygenase alpha subunit family. As to quaternary structure, the system is composed of an oxygenase subunit (GbcA) and a reductase subunit (GbcB). Requires [2Fe-2S] cluster as cofactor. The cofactor is Fe cation.

It carries out the reaction glycine betaine + NADH + O2 + H(+) = N,N-dimethylglycine + formaldehyde + NAD(+) + H2O. Functionally, involved in degradation of glycine betaine. Part of a Rieske-type oxygenase system that catalyzes the conversion of glycine betaine (GB) to dimethylglycine (DMG). This subunit is the terminal oxygenase component of the system. Required for growth on choline and GB, but not for growth on DMG. The chain is Glycine betaine monooxygenase oxygenase subunit from Pseudomonas aeruginosa (strain ATCC 15692 / DSM 22644 / CIP 104116 / JCM 14847 / LMG 12228 / 1C / PRS 101 / PAO1).